The sequence spans 132 residues: Transcription antitermination protein NusB (132 aa).

It belongs to the NusB family.

In terms of biological role, involved in transcription antitermination. Required for transcription of ribosomal RNA (rRNA) genes. Binds specifically to the boxA antiterminator sequence of the ribosomal RNA (rrn) operons. This chain is Transcription antitermination protein NusB, found in Campylobacter jejuni subsp. jejuni serotype O:6 (strain 81116 / NCTC 11828).